A 186-amino-acid chain; its full sequence is Cell division protein SepF (186 aa).

Disordered stretches follow at residues 14 to 59 (EHDE…NETS) and 157 to 186 (GRSQ…RLAQ). Acidic residues predominate over residues 16–27 (DEYEEDYDEEME). Positions 159–171 (SQESNETSSSVSS) are enriched in low complexity.

It belongs to the SepF family. As to quaternary structure, homodimer. Interacts with FtsZ.

Its subcellular location is the cytoplasm. Cell division protein that is part of the divisome complex and is recruited early to the Z-ring. Probably stimulates Z-ring formation, perhaps through the cross-linking of FtsZ protofilaments. Its function overlaps with FtsA. The protein is Cell division protein SepF of Synechocystis sp. (strain ATCC 27184 / PCC 6803 / Kazusa).